Consider the following 273-residue polypeptide: Neuferricin (273 aa).

The first 22 residues, 1–22, serve as a signal peptide directing secretion; sequence MLGYLAAAALCLAAVLLMRLDH. In terms of domain architecture, Cytochrome b5 heme-binding spans 44–143; the sequence is GRLMSKEELS…QNYITIGKLT (100 aa).

The protein belongs to the cytochrome b5 family. MAPR subfamily.

The protein resides in the secreted. Its function is as follows. Heme-binding protein which promotes neuronal but not astrocyte differentiation. The sequence is that of Neuferricin (cyb5d2) from Xenopus tropicalis (Western clawed frog).